The sequence spans 640 residues: MKIKVKLPDGKEKEYDRGITPAEIAKELGVKKAIGAVVNGELWDLKRPIENDCELRLVTLEDPEAPEFYRHTMAHILAQAVMRIYGKENVKLGIGPTIENGFYYDFDIKNGRLTEEDLPKIEQEMKKIIKENLPIERKEISKEEARKLFNNQPYKLELIEEIEGDRVTIYRQGEFVDLCRGPHLPSTGIVKHFKLLSVSGAYWRGSEKNPMLTRVYGTAFAKKEDLDNYLKFLEEAQRRDHRKLGPHLELFMLNTEYAPGMPFFLPKGVVVLNELMKFSRELHRERGYQEIFTPLIMNEQLWKISGHWDHYAENMYFIEKDEERYAVKPMNCPGHILVYKSRTVSYRDLPLRFFEFGRVHRYERSGVLHGLMRVRSFTQDDAHIFCTPGQIEEEILGVLDLINTIYSQFGFTYRVELSTMPEDHMGDEAIWEKATTALKNALERAGLSYKVNEGEGAFYGPKIDFHIRDSIGREWQCATIQLDFMMPEKFNVTYIGPDNKEHRAVMIHRAIYGSLERFFGILIEHFAGAFPTWLAPIQVAVIPISEKHNDGAEKIAKRISQEGFRVFFDNRRETLGYRIRQAQTQKIPYMIILGDKELESGKISVRTRTGKEIKDVDLEHFVETLRNEVLSRKLELLMEG.

Residues 1 to 59 (MKIKVKLPDGKEKEYDRGITPAEIAKELGVKKAIGAVVNGELWDLKRPIENDCELRLVT) enclose the TGS domain. Residues 240–531 (DHRKLGPHLE…LIEHFAGAFP (292 aa)) are catalytic. Zn(2+) is bound by residues Cys-332, His-383, and His-508.

Belongs to the class-II aminoacyl-tRNA synthetase family. As to quaternary structure, homodimer. Zn(2+) is required as a cofactor.

It is found in the cytoplasm. It carries out the reaction tRNA(Thr) + L-threonine + ATP = L-threonyl-tRNA(Thr) + AMP + diphosphate + H(+). Its function is as follows. Catalyzes the attachment of threonine to tRNA(Thr) in a two-step reaction: L-threonine is first activated by ATP to form Thr-AMP and then transferred to the acceptor end of tRNA(Thr). Also edits incorrectly charged L-seryl-tRNA(Thr). The polypeptide is Threonine--tRNA ligase (Thermotoga sp. (strain RQ2)).